The chain runs to 443 residues: ATP-dependent protease ATPase subunit HslU (443 aa).

ATP contacts are provided by residues Ile18 and 60–65 (GVGKTE). The tract at residues 137–156 (PPPRDAWGQNEQSEDTSNTR) is disordered. Polar residues predominate over residues 145-156 (QNEQSEDTSNTR). Positions 256, 321, and 393 each coordinate ATP.

The protein belongs to the ClpX chaperone family. HslU subfamily. A double ring-shaped homohexamer of HslV is capped on each side by a ring-shaped HslU homohexamer. The assembly of the HslU/HslV complex is dependent on binding of ATP.

Its subcellular location is the cytoplasm. Functionally, ATPase subunit of a proteasome-like degradation complex; this subunit has chaperone activity. The binding of ATP and its subsequent hydrolysis by HslU are essential for unfolding of protein substrates subsequently hydrolyzed by HslV. HslU recognizes the N-terminal part of its protein substrates and unfolds these before they are guided to HslV for hydrolysis. This Vibrio vulnificus (strain YJ016) protein is ATP-dependent protease ATPase subunit HslU.